The chain runs to 346 residues: Acetyl-coenzyme A carboxylase carboxyl transferase subunit beta (346 aa).

The region spanning 24-292 (LWIKCPKSGD…LPEVEPIAVA (269 aa)) is the CoA carboxyltransferase N-terminal domain. Acidic residues predominate over residues 300-311 (AEAEAAPDEVVE). Positions 300-346 (AEAEAAPDEVVEVEAPAVDEIVEEKPAATKAKPRSKAKSKAAPKTDE) are disordered. Residues 330–340 (AKPRSKAKSKA) are compositionally biased toward basic residues.

The protein belongs to the AccD/PCCB family. As to quaternary structure, acetyl-CoA carboxylase is a heterohexamer composed of biotin carboxyl carrier protein (AccB), biotin carboxylase (AccC) and two subunits each of ACCase subunit alpha (AccA) and ACCase subunit beta (AccD).

The protein resides in the cytoplasm. The enzyme catalyses N(6)-carboxybiotinyl-L-lysyl-[protein] + acetyl-CoA = N(6)-biotinyl-L-lysyl-[protein] + malonyl-CoA. Its pathway is lipid metabolism; malonyl-CoA biosynthesis; malonyl-CoA from acetyl-CoA: step 1/1. Functionally, component of the acetyl coenzyme A carboxylase (ACC) complex. Biotin carboxylase (BC) catalyzes the carboxylation of biotin on its carrier protein (BCCP) and then the CO(2) group is transferred by the transcarboxylase to acetyl-CoA to form malonyl-CoA. The sequence is that of Acetyl-coenzyme A carboxylase carboxyl transferase subunit beta from Hirschia baltica (strain ATCC 49814 / DSM 5838 / IFAM 1418).